A 154-amino-acid polypeptide reads, in one-letter code: Ribosome maturation factor RimP (154 aa).

Belongs to the RimP family.

Its subcellular location is the cytoplasm. Functionally, required for maturation of 30S ribosomal subunits. This is Ribosome maturation factor RimP from Prochlorococcus marinus (strain MIT 9303).